The sequence spans 192 residues: MSEYLLLLIGTVLVNNFVLVKFLGLCPFMGVSGKLESAIGMSMATTFVLTLASVLSFLVNQYLLAPFDLTYLRTMSFILVIAVVVQFTEMLVQKTSASLHRALGIYLPLITTNCAVLGVALLNVNEQHDFLESAIYGFGAAVGFSLVLILFSAMRERLAAADVPMPFRGGAIAMITAGLMSLAFMGFTGLVK.

6 helical membrane passes run L5–L25, I39–V59, L72–V92, A102–L122, A134–M154, and A171–V191.

This sequence belongs to the NqrDE/RnfAE family. The complex is composed of six subunits: RnfA, RnfB, RnfC, RnfD, RnfE and RnfG.

The protein localises to the cell inner membrane. Its function is as follows. Part of a membrane-bound complex that couples electron transfer with translocation of ions across the membrane. This chain is Ion-translocating oxidoreductase complex subunit A, found in Shewanella amazonensis (strain ATCC BAA-1098 / SB2B).